A 222-amino-acid chain; its full sequence is MGQKVHPKGFRLGIIKDWDSRWFANDKDFEKYLLEDYKIRRHIKEKLYNAGISRIEIERAAKRIKVIIHTAKPGIVIGRAGSGVEALRKELEKITGGKTISLDIKEIKVPELDAQLVAENIAAQLEKRVSFRKAMKQAMARALRSGAKGIKTMVSGRLGGADIARTEWYKEGRIPLQTLRADIDYGFAEAHTTYGRIGVKTWIYKGDVLPQKGAAAEKGGDK.

Residues 39 to 108 form the KH type-2 domain; the sequence is IRRHIKEKLY…TISLDIKEIK (70 aa).

Belongs to the universal ribosomal protein uS3 family. Part of the 30S ribosomal subunit. Forms a tight complex with proteins S10 and S14.

In terms of biological role, binds the lower part of the 30S subunit head. Binds mRNA in the 70S ribosome, positioning it for translation. The chain is Small ribosomal subunit protein uS3 from Caldicellulosiruptor saccharolyticus (strain ATCC 43494 / DSM 8903 / Tp8T 6331).